Here is a 554-residue protein sequence, read N- to C-terminus: Terpene synthase 17 (554 aa).

Positions 306, 310, and 458 each coordinate Mg(2+). Residues aspartate 306 to aspartate 310 carry the DDXXD motif motif.

This sequence belongs to the terpene synthase family. Tpsa subfamily. Requires Mg(2+) as cofactor. It depends on Mn(2+) as a cofactor.

It catalyses the reaction (2E,6E)-farnesyl diphosphate = (+)-valencene + diphosphate. The enzyme catalyses (2E,6E)-farnesyl diphosphate = (E)-beta-farnesene + diphosphate. It carries out the reaction (2E,6E)-farnesyl diphosphate = gamma-gurjunene + diphosphate. The catalysed reaction is (2Z,6Z)-farnesyl diphosphate = beta-bisabolene + diphosphate. It catalyses the reaction (2Z,6Z)-farnesyl diphosphate = (E)-gamma-bisabolene + diphosphate. The enzyme catalyses (2E)-geranyl diphosphate = limonene + diphosphate. It carries out the reaction (2E)-geranyl diphosphate = beta-myrcene + diphosphate. The catalysed reaction is (2E)-geranyl diphosphate = (E)-beta-ocimene + diphosphate. It catalyses the reaction (2E)-geranyl diphosphate = terpinolene + diphosphate. The enzyme catalyses (2E)-geranyl diphosphate = gamma-terpinene + diphosphate. It carries out the reaction (2Z,6Z)-farnesyl diphosphate = (Z)-gamma-bisabolene + diphosphate. The catalysed reaction is (2E,6E)-farnesyl diphosphate = (1S,5S,6R)-alpha-bergamotene + diphosphate. It catalyses the reaction (2Z,6Z)-farnesyl diphosphate = (1S,5S,6S)-alpha-bergamotene + diphosphate. It functions in the pathway secondary metabolite biosynthesis; terpenoid biosynthesis. Its function is as follows. Sesquiterpene synthase involved in the biosynthesis of volatile compounds. Mediates the conversion of (2E,6E)-farnesyl diphosphate (FPP) into gamma-gurjunene, (E)-beta-farnesene and (+)-valencene, and of (2Z,6Z)-farnesyl diphosphate ((ZZ)-FPP) into (E)-alpha-bergamotene and (Z)-gamma-bisabolene as well as beta-bisabolene, (Z)-alpha-bergamotene and (E)-gamma-bisabolene to a lower extent. Can act with a low efficiency as a monoterpene synthase with geranyl diphosphate (GPP) as substrate, thus producing beta-myrcene, (E)-beta-ocimene, limonene, terpinolene, gamma-terpinene and (Z)-beta-ocimene. The protein is Terpene synthase 17 of Solanum habrochaites (Wild tomato).